Consider the following 342-residue polypeptide: Nuclear hormone receptor family member nhr-150 (342 aa).

Residues 1 to 71 constitute a DNA-binding region (nuclear receptor); the sequence is MCQVCGAAEA…AGMTSKKIQS (71 aa). The NR C4-type zinc finger occupies 2–22; that stretch reads CQVCGAAEADLHFGGISCRAC. Residues 39–54 form an NR C4-type; degenerate zinc finger; the sequence is CTCKTRILDSHPCRSC. Positions 94–341 constitute an NR LBD domain; sequence SARIIPRSSL…GFMEIIRESK (248 aa).

It belongs to the nuclear hormone receptor family.

Its subcellular location is the nucleus. Functionally, orphan nuclear receptor. The chain is Nuclear hormone receptor family member nhr-150 (nhr-150) from Caenorhabditis elegans.